Reading from the N-terminus, the 225-residue chain is MNSIKFPVLDRTTKNSVISTTLNDLSNWSRLSSLWPLLYGTSCCFIEFASLIGSRFDFDRYGLVPRSSPRQADLILTAGTVTMKMAPSLVRLYEQMPEPKYVIAMGACTITGGMFSTDSYSTVRGVDKLIPVDVYLPGCPPKPEAVIDAITKLRKKIAREIYKDRIRPQQGNRCFTTNHKFFVVRSPHTGNYDQELLYAPSSTSEISTETFFKYKSPVSSNELVN.

Cysteine 43, cysteine 44, cysteine 108, and cysteine 139 together coordinate [4Fe-4S] cluster.

Belongs to the complex I 20 kDa subunit family. As to quaternary structure, NDH is composed of at least 16 different subunits, 5 of which are encoded in the nucleus. [4Fe-4S] cluster serves as cofactor.

The protein localises to the plastid. It is found in the chloroplast thylakoid membrane. The catalysed reaction is a plastoquinone + NADH + (n+1) H(+)(in) = a plastoquinol + NAD(+) + n H(+)(out). It catalyses the reaction a plastoquinone + NADPH + (n+1) H(+)(in) = a plastoquinol + NADP(+) + n H(+)(out). Its function is as follows. NDH shuttles electrons from NAD(P)H:plastoquinone, via FMN and iron-sulfur (Fe-S) centers, to quinones in the photosynthetic chain and possibly in a chloroplast respiratory chain. The immediate electron acceptor for the enzyme in this species is believed to be plastoquinone. Couples the redox reaction to proton translocation, and thus conserves the redox energy in a proton gradient. In Nasturtium officinale (Watercress), this protein is NAD(P)H-quinone oxidoreductase subunit K, chloroplastic.